The sequence spans 121 residues: Large ribosomal subunit protein uL22 (121 aa).

The protein belongs to the universal ribosomal protein uL22 family. As to quaternary structure, part of the 50S ribosomal subunit.

In terms of biological role, this protein binds specifically to 23S rRNA; its binding is stimulated by other ribosomal proteins, e.g. L4, L17, and L20. It is important during the early stages of 50S assembly. It makes multiple contacts with different domains of the 23S rRNA in the assembled 50S subunit and ribosome. The globular domain of the protein is located near the polypeptide exit tunnel on the outside of the subunit, while an extended beta-hairpin is found that lines the wall of the exit tunnel in the center of the 70S ribosome. The polypeptide is Large ribosomal subunit protein uL22 (Synechocystis sp. (strain ATCC 27184 / PCC 6803 / Kazusa)).